Here is a 235-residue protein sequence, read N- to C-terminus: Class B acid phosphatase (235 aa).

An N-terminal signal peptide occupies residues 1–22; the sequence is MKNLLKLSAIAILAASAVSTFA. Residue aspartate 67 is the Nucleophile of the active site. Residues aspartate 67 and aspartate 69 each contribute to the Mg(2+) site. Residue aspartate 69 is the Proton donor of the active site. Residues 135-136 and lysine 175 contribute to the substrate site; that span reads TG. Mg(2+) is bound at residue aspartate 190.

It belongs to the class B bacterial acid phosphatase family. In terms of assembly, homotetramer. Mg(2+) serves as cofactor.

Its subcellular location is the periplasm. The catalysed reaction is a phosphate monoester + H2O = an alcohol + phosphate. Functionally, dephosphorylates several organic phosphate monoesters. Also has a phosphotransferase activity catalyzing the transfer of low-energy phosphate groups from organic phosphate monoesters to free hydroxyl groups of various organic compounds. The protein is Class B acid phosphatase of Haemophilus parainfluenzae (strain T3T1).